Here is a 295-residue protein sequence, read N- to C-terminus: tRNA dimethylallyltransferase (295 aa).

An ATP-binding site is contributed by 9 to 16; the sequence is GATATGKS. 11–16 provides a ligand contact to substrate; the sequence is TATGKS. The segment at 34–37 is interaction with substrate tRNA; sequence DSRQ.

It belongs to the IPP transferase family. Monomer. The cofactor is Mg(2+).

The catalysed reaction is adenosine(37) in tRNA + dimethylallyl diphosphate = N(6)-dimethylallyladenosine(37) in tRNA + diphosphate. Catalyzes the transfer of a dimethylallyl group onto the adenine at position 37 in tRNAs that read codons beginning with uridine, leading to the formation of N6-(dimethylallyl)adenosine (i(6)A). The sequence is that of tRNA dimethylallyltransferase from Nostoc sp. (strain PCC 7120 / SAG 25.82 / UTEX 2576).